Reading from the N-terminus, the 479-residue chain is MAVLGVQLVVTLLTATLMHRLAPHCSFARWLLCNGSLFRYKHPSEEELRALAGKPRPRGRKERWANGLSEEKPLSVPRDAPFQLETCPLTTVDALVLRFFLEYQWFVDFAVYSGGVYLFTEAYYYMLGPAKETNIAVFWCLLTVTFSIKMFLTVTRLYFSAEEGGERSVCLTFAFLFLLLAMLVQVVREETLELGLEPGLASMTQNLEPLLKKQGWDWALPVAKLAIRVGLAVVGSVLGAFLTFPGLRLAQTHRDALTMSEDRPMLQFLLHTSFLSPLFILWLWTKPIARDFLHQPPFGETRFSLLSDSAFDSGRLWLLVVLCLLRLAVTRPHLQAYLCLAKARVEQLRREAGRIEAREIQQRVVRVYCYVTVVSLQYLTPLILTLNCTLLLKTLGGYSWGLGPAPLLSPDPSSASAAPIGSGEDEVQQTAARIAGALGGLLTPLFLRGVLAYLIWWTAACQLLASLFGLYFHQHLAGS.

Residues 1–28 (MAVLGVQLVVTLLTATLMHRLAPHCSFA) form the signal peptide. Residues 29–98 (RWLLCNGSLF…LTTVDALVLR (70 aa)) are Extracellular-facing. Asn-34 carries an N-linked (GlcNAc...) asparagine glycan. A Phosphoserine modification is found at Ser-69. Residues 99-119 (FFLEYQWFVDFAVYSGGVYLF) traverse the membrane as a helical segment. Over 120–134 (TEAYYYMLGPAKETN) the chain is Cytoplasmic. The chain crosses the membrane as a helical span at residues 135–155 (IAVFWCLLTVTFSIKMFLTVT). Topologically, residues 156–166 (RLYFSAEEGGE) are extracellular. The chain crosses the membrane as a helical span at residues 167-187 (RSVCLTFAFLFLLLAMLVQVV). At 188 to 224 (REETLELGLEPGLASMTQNLEPLLKKQGWDWALPVAK) the chain is on the cytoplasmic side. A helical transmembrane segment spans residues 225–245 (LAIRVGLAVVGSVLGAFLTFP). The Extracellular segment spans residues 246–263 (GLRLAQTHRDALTMSEDR). Residues 264–284 (PMLQFLLHTSFLSPLFILWLW) traverse the membrane as a helical segment. At 285-304 (TKPIARDFLHQPPFGETRFS) the chain is on the cytoplasmic side. Residues 305–325 (LLSDSAFDSGRLWLLVVLCLL) form a helical membrane-spanning segment. Residues 326-370 (RLAVTRPHLQAYLCLAKARVEQLRREAGRIEAREIQQRVVRVYCY) are Extracellular-facing. The helical transmembrane segment at 371 to 391 (VTVVSLQYLTPLILTLNCTLL) threads the bilayer. At 392–449 (LKTLGGYSWGLGPAPLLSPDPSSASAAPIGSGEDEVQQTAARIAGALGGLLTPLFLRG) the chain is on the cytoplasmic side. Residues 450-470 (VLAYLIWWTAACQLLASLFGL) form a helical membrane-spanning segment. The Extracellular portion of the chain corresponds to 471-479 (YFHQHLAGS).

It belongs to the TMEM161 family.

The protein resides in the membrane. In terms of biological role, may play a role in protection against oxidative stress. Overexpression leads to reduced levels of oxidant-induced DNA damage and apoptosis. The sequence is that of Transmembrane protein 161A (TMEM161A) from Homo sapiens (Human).